Consider the following 331-residue polypeptide: Tumor necrosis factor receptor superfamily member 6 (331 aa).

An N-terminal signal peptide occupies residues 1-25; that stretch reads MLGIWTLLPLVLTSVVRLLSKCVNA. Residues 26–171 lie on the Extracellular side of the membrane; sequence QVTDINSKGF…NTKCKEEDSR (146 aa). TNFR-Cys repeat units follow at residues 47 to 83, 84 to 127, and 128 to 166; these read RNLEGLHHEGQFCRNPCPPGERKARDCTVNEDEPDCV, PCQE…NTKC, and RCKPNFFCNSAVCEHCDPCTKCKHGIIEECTLTSNTKCK. 8 cysteine pairs are disulfide-bonded: Cys-59–Cys-73, Cys-63–Cys-82, Cys-85–Cys-101, Cys-104–Cys-119, Cys-107–Cys-127, Cys-129–Cys-143, Cys-146–Cys-157, and Cys-149–Cys-165. Asn-118 carries an N-linked (GlcNAc...) asparagine glycan. Residues 172 to 192 form a helical membrane-spanning segment; that stretch reads SDLLWLCLLLLLIPPIVYVVI. The Cytoplasmic portion of the chain corresponds to 193-331; it reads KKACRKHRKE…NFGNEVQNLV (139 aa). The S-palmitoyl cysteine moiety is linked to residue Cys-196. An interaction with HIPK3 region spans residues 209 to 313; it reads STTLNPETAI…EKIHAVILKD (105 aa). The residue at position 211 (Thr-211) is a Phosphothreonine. At Ser-221 the chain carries Phosphoserine. Residues 226-250 are interaction with CALM; the sequence is SKYITTIAGGMTLSQVRDFVRKNGV. The 85-residue stretch at 226-310 folds into the Death domain; the sequence is SKYITTIAGG…TLAEKIHAVI (85 aa). Position 318 is a phosphothreonine (Thr-318).

As to quaternary structure, binds DAXX. Interacts with HIPK3. Part of a complex containing HIPK3 and FADD. Binds RIPK1 and FAIM2. Interacts with BABAM2 and FEM1B. Interacts with FADD. Interacts directly (via DED domain) with NOL3 (via CARD domain); inhibits death-inducing signaling complex (DISC) assembly by inhibiting the increase in FAS-FADD binding induced by FAS activation. Interacts with CALM. In the absence of stimulation, interacts with BIRC2, DDX3X and GSK3B. The interaction with BIRC2 and DDX3X is further enhanced upon receptor stimulation and accompanied by DDX3X and BIRC2 cleavage. Palmitoylated. Palmitoylation by ZDHHC7 prevents the lysosomal degradation of FAS regulating its expression at the plasma membrane.

The protein resides in the cell membrane. Its subcellular location is the membrane raft. Receptor for TNFSF6/FASLG. The adapter molecule FADD recruits caspase-8 to the activated receptor. The resulting death-inducing signaling complex (DISC) performs caspase-8 proteolytic activation which initiates the subsequent cascade of caspases (aspartate-specific cysteine proteases) mediating apoptosis. FAS-mediated apoptosis may have a role in the induction of peripheral tolerance, in the antigen-stimulated suicide of mature T-cells, or both. This chain is Tumor necrosis factor receptor superfamily member 6 (FAS), found in Cercocebus atys (Sooty mangabey).